The chain runs to 385 residues: MELQEVLHMNGGEGDTSYAKNSSYNQLVLTKVKPVLEQCIRELLRANLPNINKCIKVADLGCASGPNTLLTVRDIVQSIDKVGQEEKNELEHPTIQIFLNDLFQNDFNSVFKLLPSFYRKLEKENGRKIGSCLISAMPGSFYGRLFPEESMHFLHSCYSVHWLSQVPSGLVTELGISANKGIIYSSKASPPPVQKAYLDQFTKDFTTFLRIHSEELLSGGRMLLTCICKGDESDGLNTIDLLERAINDLVVEGLLEEEKLDSFNLPLYTPSLEVVKCIVEEEGSFEILYLETFKVRYDAGFSIDDDYQVRSLFQVYCDEHVKAAYVTFFFRAVFEPILASHFGEAIMPDLFHRFAKNAAKALRLGNGFYNSLIISLAKKPEKSDV.

Y18, C62, N67, D101, L102, S140, F141, and C157 together coordinate S-adenosyl-L-homocysteine. Caffeine contacts are provided by Y158, H161, and W162. N179 is a binding site for Mg(2+). T238 provides a ligand contact to caffeine. Mg(2+) is bound by residues D261, F263, and N264. Y369 lines the caffeine pocket.

Belongs to the methyltransferase superfamily. Type-7 methyltransferase family. It depends on Mg(2+) as a cofactor.

It participates in alkaloid biosynthesis. May be involved in the biosynthesis of caffeine. The chain is Probable caffeine synthase MTL2 from Coffea canephora (Robusta coffee).